A 233-amino-acid chain; its full sequence is MKAISVLSGGLDSLVTSMVAKKENSEIATVTFNYGQMALDKELKSAKKISKVLGAENQVFDISFVKEFSKSGLNTGNIPNPKKDDLDDFKESEKTMKSVWVPARNMIMFSIASGFAEGINAEKIYSGLNKEEGVTFPDNSTEFINSFNKSLEYGTLNKVKMYAPLYNLDKVEIATFGKRLEDELGLDILKYSYSCYRDNLKDYLHCGTCESCMRRKRAFESAGIVDPTNYILQ.

Residue 7–17 (LSGGLDSLVTS) coordinates ATP. Cys-195, Cys-206, Cys-209, and Cys-212 together coordinate Zn(2+).

This sequence belongs to the QueC family. The cofactor is Zn(2+).

It catalyses the reaction 7-carboxy-7-deazaguanine + NH4(+) + ATP = 7-cyano-7-deazaguanine + ADP + phosphate + H2O + H(+). It participates in purine metabolism; 7-cyano-7-deazaguanine biosynthesis. Functionally, catalyzes the ATP-dependent conversion of 7-carboxy-7-deazaguanine (CDG) to 7-cyano-7-deazaguanine (preQ(0)). The polypeptide is 7-cyano-7-deazaguanine synthase (Methanococcus vannielii (strain ATCC 35089 / DSM 1224 / JCM 13029 / OCM 148 / SB)).